The primary structure comprises 231 residues: Putative cobalt transport protein CbiM 1 (231 aa).

The next 6 membrane-spanning stretches (helical) occupy residues 8–28 (LPLQ…AYGI), 41–61 (TLPL…LKMP), 74–94 (GLGA…IVLV), 97–117 (ALFL…SMGI), 138–158 (IVNV…ITSI), and 175–195 (FITF…IEGI).

This sequence belongs to the CbiM family. Forms an energy-coupling factor (ECF) transporter complex composed of an ATP-binding protein (A component, CbiO), a transmembrane protein (T component, CbiQ) and 2 possible substrate-capture proteins (S components, CbiM and CbiN) of unknown stoichimetry.

Its subcellular location is the cell membrane. Its pathway is cofactor biosynthesis; adenosylcobalamin biosynthesis. In terms of biological role, part of the energy-coupling factor (ECF) transporter complex CbiMNOQ involved in cobalt import. This is Putative cobalt transport protein CbiM 1 from Methanosphaerula palustris (strain ATCC BAA-1556 / DSM 19958 / E1-9c).